The primary structure comprises 147 residues: Large ribosomal subunit protein uL15 (147 aa).

Residues Met-1 to Thr-58 are disordered. The segment covering Ser-42–Gly-52 has biased composition (gly residues).

This sequence belongs to the universal ribosomal protein uL15 family. As to quaternary structure, part of the 50S ribosomal subunit.

In terms of biological role, binds to the 23S rRNA. The protein is Large ribosomal subunit protein uL15 of Caldanaerobacter subterraneus subsp. tengcongensis (strain DSM 15242 / JCM 11007 / NBRC 100824 / MB4) (Thermoanaerobacter tengcongensis).